The sequence spans 1490 residues: Leucine-rich repeat-containing protein 7 (1490 aa).

LRR repeat units lie at residues isoleucine 23–phenylalanine 44, threonine 47–cysteine 68, alanine 70–leucine 91, asparagine 93–cysteine 114, cysteine 116–leucine 137, asparagine 139–valine 161, lysine 162–leucine 183, glutamine 185–isoleucine 206, asparagine 208–leucine 229, methionine 231–glutamate 253, alanine 254–leucine 275, lysine 277–leucine 298, leucine 300–leucine 321, serine 323–cysteine 344, asparagine 346–methionine 367, arginine 369–lysine 391, and glutamate 392–alanine 413. 3 positions are modified to phosphoserine: serine 439, serine 441, and serine 443. Positions lysine 663–histidine 676 are enriched in basic and acidic residues. 3 disordered regions span residues lysine 663–leucine 709, aspartate 775–arginine 808, and glutamate 822–proline 899. Over residues cysteine 677 to threonine 686 the composition is skewed to polar residues. The segment covering tyrosine 687 to serine 700 has biased composition (low complexity). Positions glutamate 787–alanine 799 are enriched in polar residues. At threonine 831 the chain carries Phosphothreonine. Serine 850 bears the Phosphoserine mark. The span at proline 859–leucine 871 shows a compositional bias: low complexity. The residue at position 865 (threonine 865) is a Phosphothreonine. Serine 869 bears the Phosphoserine mark. Basic and acidic residues predominate over residues proline 872 to threonine 882. Phosphoserine occurs at positions 947, 949, and 1118. Residue arginine 1149 is modified to Omega-N-methylarginine. Positions leucine 1194 to proline 1217 are enriched in polar residues. Residues leucine 1194–valine 1218 are disordered. Residue serine 1233 is modified to Phosphoserine. Disordered stretches follow at residues glycine 1238–lysine 1265 and arginine 1282–leucine 1312. The span at lysine 1243 to cysteine 1263 shows a compositional bias: basic and acidic residues. Over residues threonine 1286–tryptophan 1307 the composition is skewed to polar residues. 2 positions are modified to phosphoserine: serine 1288 and serine 1392. The 91-residue stretch at glutamate 1398–leucine 1488 folds into the PDZ domain.

The protein belongs to the LAP (LRR and PDZ) protein family. As to quaternary structure, interacts with CNKSR2 and DLG4. Interacts with CTNND2/Catenin delta-2. Forms a complex with N-cadherin through CTNND2. Interacts with CAMK2A. O-glycosylated and phosphorylated. As to expression, brain-specific. Highly concentrated at synapses.

Its subcellular location is the cytoplasm. The protein localises to the postsynaptic density. Its function is as follows. Required for normal synaptic spine architecture and function. Necessary for DISC1 and GRM5 localization to postsynaptic density complexes and for both N-methyl D-aspartate receptor-dependent and metabotropic glutamate receptor-dependent long term depression. This chain is Leucine-rich repeat-containing protein 7 (Lrrc7), found in Rattus norvegicus (Rat).